A 276-amino-acid polypeptide reads, in one-letter code: Insulin-induced gene 1 protein (276 aa).

Disordered stretches follow at residues Met-1–Ser-26 and Ala-49–Ser-73. Topologically, residues Met-1–Leu-83 are cytoplasmic. Positions Gly-16–Ala-25 are enriched in basic residues. The helical transmembrane segment at Val-84–Val-106 threads the bilayer. The Extracellular portion of the chain corresponds to Gln-107 to Ala-125. A helical membrane pass occupies residues Trp-126–Tyr-143. Residues Pro-144–Arg-158 are Cytoplasmic-facing. Glycyl lysine isopeptide (Lys-Gly) (interchain with G-Cter in ubiquitin) cross-links involve residues Lys-155 and Lys-157. Residues Glu-159–Asp-181 traverse the membrane as a helical segment. The Extracellular segment spans residues Phe-182 to Asn-184. Residues Asn-185–Phe-203 traverse the membrane as a helical segment. The Cytoplasmic segment spans residues Asp-204–Ser-208. Phosphoserine is present on Ser-206. Residues Gly-209–Asn-230 traverse the membrane as a helical segment. The Extracellular portion of the chain corresponds to Gly-231 to Arg-244. Residues Ser-245–Gly-262 form a helical membrane-spanning segment. The Cytoplasmic portion of the chain corresponds to Arg-263 to Asp-276. The KxHxx motif lies at Pro-270 to Asp-276.

Belongs to the INSIG family. Interacts with SCAP; interaction is direct and only takes place in the presence of sterols; it prevents interaction between SCAP and the coat protein complex II (COPII). Associates with the SCAP-SREBP complex (composed of SCAP and SREBF1/SREBP1 or SREBF2/SREBP2); association is mediated via its interaction with SCAP and only takes place in the presence of sterols. Interaction with SCAP is mutually exclusive with PAQR3. Interacts with HMGCR (via its SSD); the interaction, accelerated by sterols, leads to the recruitment of HMGCR to AMFR/gp78 for its ubiquitination by the sterol-mediated ERAD pathway. Interacts with AMFR/gp78 (via its membrane domain); the interaction recruits HMCR at the ER membrane for its ubiquitination and degradation by the sterol-mediated ERAD pathway. Interacts with SOAT2/ACAT2; leading to promote recruitment of AMFR/gp78 and subsequent ubiquitination of SOAT2/ACAT2. Interacts with RNF139. Interacts with RNF145. Phosphorylation at Ser-206 by PCK1 reduces binding to oxysterol, disrupting the interaction between INSIG1 and SCAP, thereby promoting nuclear translocation of SREBP proteins (SREBF1/SREBP1 or SREBF2/SREBP2) and subsequent transcription of downstream lipogenesis-related genes. Post-translationally, ubiquitinated by AMFR/gp78 in response to sterol deprivation, leading to its degradation: when the SCAP-SREBP complex becomes dissociated from INSIG1, INSIG1 is then ubiquitinated and degraded in proteasomes. Although ubiquitination is required for rapid INSIG1 degradation, it is not required for release of the SCAP-SREBP complex. Ubiquitinated by RNF139.

It is found in the endoplasmic reticulum membrane. Its function is as follows. Oxysterol-binding protein that mediates feedback control of cholesterol synthesis by controlling both endoplasmic reticulum to Golgi transport of SCAP and degradation of HMGCR. Acts as a negative regulator of cholesterol biosynthesis by mediating the retention of the SCAP-SREBP complex in the endoplasmic reticulum, thereby blocking the processing of sterol regulatory element-binding proteins (SREBPs) SREBF1/SREBP1 and SREBF2/SREBP2. Binds oxysterol, including 25-hydroxycholesterol, regulating interaction with SCAP and retention of the SCAP-SREBP complex in the endoplasmic reticulum. In presence of oxysterol, interacts with SCAP, retaining the SCAP-SREBP complex in the endoplasmic reticulum, thereby preventing SCAP from escorting SREBF1/SREBP1 and SREBF2/SREBP2 to the Golgi. Sterol deprivation or phosphorylation by PCK1 reduce oxysterol-binding, disrupting the interaction between INSIG1 and SCAP, thereby promoting Golgi transport of the SCAP-SREBP complex, followed by processing and nuclear translocation of SREBF1/SREBP1 and SREBF2/SREBP2. Also regulates cholesterol synthesis by regulating degradation of HMGCR: initiates the sterol-mediated ubiquitin-mediated endoplasmic reticulum-associated degradation (ERAD) of HMGCR via recruitment of the reductase to the ubiquitin ligases AMFR/gp78 and/or RNF139. Also regulates degradation of SOAT2/ACAT2 when the lipid levels are low: initiates the ubiquitin-mediated degradation of SOAT2/ACAT2 via recruitment of the ubiquitin ligases AMFR/gp78. The sequence is that of Insulin-induced gene 1 protein from Bos taurus (Bovine).